Consider the following 205-residue polypeptide: Large ribosomal subunit protein eL15 (205 aa).

Disordered stretches follow at residues 70–90 (GRKR…HGVN) and 172–197 (RGLR…KRRN).

This sequence belongs to the eukaryotic ribosomal protein eL15 family.

The protein is Large ribosomal subunit protein eL15 (rpl15-1) of Dictyostelium discoideum (Social amoeba).